Reading from the N-terminus, the 399-residue chain is Nicotinate phosphoribosyltransferase (399 aa).

Phosphohistidine; by autocatalysis is present on H217.

The protein belongs to the NAPRTase family. Post-translationally, transiently phosphorylated on a His residue during the reaction cycle. Phosphorylation strongly increases the affinity for substrates and increases the rate of nicotinate D-ribonucleotide production. Dephosphorylation regenerates the low-affinity form of the enzyme, leading to product release.

It carries out the reaction nicotinate + 5-phospho-alpha-D-ribose 1-diphosphate + ATP + H2O = nicotinate beta-D-ribonucleotide + ADP + phosphate + diphosphate. The protein operates within cofactor biosynthesis; NAD(+) biosynthesis; nicotinate D-ribonucleotide from nicotinate: step 1/1. In terms of biological role, catalyzes the synthesis of beta-nicotinate D-ribonucleotide from nicotinate and 5-phospho-D-ribose 1-phosphate at the expense of ATP. This is Nicotinate phosphoribosyltransferase from Burkholderia cenocepacia (strain HI2424).